Here is a 716-residue protein sequence, read N- to C-terminus: Macrophage-expressed gene 1 protein (716 aa).

The first 20 residues, 1–20, serve as a signal peptide directing secretion; it reads MNNFRATILFWAVAAWVTSG. The MACPF domain occupies 30–345; sequence GVQKCKNALK…TAVKRYYTFN (316 aa). Cys-34 and Cys-70 form a disulfide bridge. Beta stranded transmembrane passes span 113–120 and 127–132; these read YSINTELS and GKFSTE. 2 N-linked (GlcNAc...) asparagine glycosylation sites follow: Asn-168 and Asn-185. 2 consecutive transmembrane segments (beta stranded) span residues 235-244 and 248-256; these read AVTASAGLAF and VNFKFEENY. An N-linked (GlcNAc...) asparagine glycan is attached at Asn-269. Cysteines 350 and 369 form a disulfide. N-linked (GlcNAc...) asparagine glycosylation occurs at Asn-375. 5 cysteine pairs are disulfide-bonded: Cys-385–Cys-397, Cys-435–Cys-449, Cys-439–Cys-445, Cys-534–Cys-572, and Cys-557–Cys-577. Positions 413-656 are P2; that stretch reads PSGYSPVRLL…GDGGGLSGGA (244 aa). Residues 656–676 form a helical membrane-spanning segment; that stretch reads AAAGVTLGVTTILAVVITLAI. Residues 693 to 716 form a disordered region; it reads RQSLVPGTAATGDTTYQEQGQSPA. The segment covering 703 to 716 has biased composition (polar residues); it reads TGDTTYQEQGQSPA.

The protein belongs to the MPEG1 family. As to quaternary structure, homooligomer; predominantly forms a homooligomeric arc-shaped pore complex instead of complete rings of 16 subunits. Post-translationally, proteolytically processed in two steps to generate the Macrophage-expressed gene 1 protein, processed form: cleaved by trypsin in proximity of the helical transmembrane domain releases the ectodomain into the lysosomal lumen to orient the pore-forming domain toward the endogenous membranes, and processed by the asparagine endopeptidase (LGMN). Proteolytic processing in antigen-containing vesicles is pH-dependent. Monoubiquitinated in response to bacterial infection; ubiquitination is required for vesicular localization and antibacterial activity and can be blocked by bacterial cell cycle inhibiting factor (cif).

It is found in the cytoplasmic vesicle membrane. Its subcellular location is the cytoplasmic vesicle. The protein resides in the phagosome membrane. Its activity is regulated as follows. Forms arc- and ring-shaped pre-pores on top of the membrane at neutral to slightly acidic pH conditions and converts to pores upon acidification. Undergoes transition from the pre-pore to the pore in a processive clockwise hand-over-hand process. In the pore state, 2 alpha-helical regions refold into transmembrane hairpins (TMH1 and TMH2) in each protomer that form in the ensemble complex giant beta-barrel transmembrane pores. In terms of biological role, pore-forming protein involved in both innate and adaptive immunity. Plays a central role in antigen cross-presentation in dendritic cells by forming a pore in antigen-containing compartments, thereby promoting delivery of antigens for cross-presentation. Also involved in innate immune response following bacterial infection; shows antibacterial activity against a wide spectrum of Gram-positive, Gram-negative and acid-fast bacteria. Reduces the viability of the intracytosolic pathogen L.monocytogenes by inhibiting acidification of the phagocytic vacuole of host cells which restricts bacterial translocation from the vacuole to the cytosol. Required for the antibacterial activity of reactive oxygen species and nitric oxide. Functionally, pore-forming protein that plays a central role in antigen cross-presentation in dendritic cells by mediating delivery of antigens for cross-presentation. Dendritic cells bridge innate and adaptive immunity by capturing exogenous antigens on MHC class-I molecules and presenting them to naive CD8(+) T-cells. Acts by forming a pore in antigen-containing compartments, promoting the release of antigens into the cytosol, enabling generation of MHCI:peptide complexes and T-cell priming. The chain is Macrophage-expressed gene 1 protein (MPEG1) from Pongo abelii (Sumatran orangutan).